Here is a 529-residue protein sequence, read N- to C-terminus: Probable threonine/serine exporter (529 aa).

10 helical membrane-spanning segments follow: residues 88–108, 168–188, 212–232, 234–254, 265–285, 312–332, 344–364, 365–385, 389–409, and 428–448; these read ITVT…PVTI, FALG…LAAV, VFGA…AGQD, TALV…VGSM, ALAR…GILI, MPLP…CLTI, AGLS…AGFG, RVVA…LISI, APAL…LAVF, and LLEA…GEFL. Residues 482-501 are disordered; sequence QPAKSQQPTGTGGQRWRSVA.

It belongs to the ThrE exporter (TC 2.A.79) family.

Its subcellular location is the cell membrane. It catalyses the reaction L-threonine(in) + H(+)(out) = L-threonine(out) + H(+)(in). In terms of biological role, catalyzes the export of L-threonine and L-serine from the cell to the extracellular environment. Export is dependent on the proton motive force. Required for in vitro growth and survival of bacteria inside macrophages. Increased expression is associated with low-level amikacin (AMK) resistance. This is Probable threonine/serine exporter from Mycobacterium tuberculosis (strain ATCC 25618 / H37Rv).